The following is a 196-amino-acid chain: Small ribosomal subunit protein uS4m (196 aa).

Residues 88–154 form the S4 RNA-binding domain; it reads KRLDVILVRL…FKSNIRKNFQ (67 aa).

It belongs to the universal ribosomal protein uS4 family.

Its subcellular location is the mitochondrion. In Marchantia polymorpha (Common liverwort), this protein is Small ribosomal subunit protein uS4m (RPS4).